A 150-amino-acid polypeptide reads, in one-letter code: SsrA-binding protein (150 aa).

It belongs to the SmpB family.

The protein localises to the cytoplasm. Its function is as follows. Required for rescue of stalled ribosomes mediated by trans-translation. Binds to transfer-messenger RNA (tmRNA), required for stable association of tmRNA with ribosomes. tmRNA and SmpB together mimic tRNA shape, replacing the anticodon stem-loop with SmpB. tmRNA is encoded by the ssrA gene; the 2 termini fold to resemble tRNA(Ala) and it encodes a 'tag peptide', a short internal open reading frame. During trans-translation Ala-aminoacylated tmRNA acts like a tRNA, entering the A-site of stalled ribosomes, displacing the stalled mRNA. The ribosome then switches to translate the ORF on the tmRNA; the nascent peptide is terminated with the 'tag peptide' encoded by the tmRNA and targeted for degradation. The ribosome is freed to recommence translation, which seems to be the essential function of trans-translation. The polypeptide is SsrA-binding protein (Bacteroides thetaiotaomicron (strain ATCC 29148 / DSM 2079 / JCM 5827 / CCUG 10774 / NCTC 10582 / VPI-5482 / E50)).